Consider the following 427-residue polypeptide: Glucose-1-phosphate adenylyltransferase (427 aa).

Residues Arg-40, His-46, and Arg-52 each contribute to the AMP site. Tyr-114 is a binding site for alpha-D-glucose 1-phosphate. Residue Arg-130 participates in AMP binding. Alpha-D-glucose 1-phosphate-binding positions include Gly-179, 194–195 (EK), and Ser-212. AMP is bound at residue Arg-386.

Belongs to the bacterial/plant glucose-1-phosphate adenylyltransferase family. Homotetramer.

It catalyses the reaction alpha-D-glucose 1-phosphate + ATP + H(+) = ADP-alpha-D-glucose + diphosphate. It functions in the pathway glycan biosynthesis; glycogen biosynthesis. Its activity is regulated as follows. Allosterically activated by fructose-1,6-bisphosphate (F16BP) and inhibited by AMP. Its function is as follows. Involved in the biosynthesis of ADP-glucose, a building block required for the elongation reactions to produce glycogen. Catalyzes the reaction between ATP and alpha-D-glucose 1-phosphate (G1P) to produce pyrophosphate and ADP-Glc. The polypeptide is Glucose-1-phosphate adenylyltransferase (Cronobacter sakazakii (strain ATCC BAA-894) (Enterobacter sakazakii)).